A 464-amino-acid chain; its full sequence is tRNA modification GTPase MnmE (464 aa).

Residues arginine 25, glutamate 87, and lysine 130 each coordinate (6S)-5-formyl-5,6,7,8-tetrahydrofolate. Residues glycine 226–glycine 386 form the TrmE-type G domain. Asparagine 236 contacts K(+). GTP is bound by residues asparagine 236–serine 241, threonine 255–threonine 261, and aspartate 280–glycine 283. Serine 240 contributes to the Mg(2+) binding site. Residues threonine 255, isoleucine 257, and threonine 260 each coordinate K(+). Threonine 261 provides a ligand contact to Mg(2+). Lysine 464 provides a ligand contact to (6S)-5-formyl-5,6,7,8-tetrahydrofolate.

This sequence belongs to the TRAFAC class TrmE-Era-EngA-EngB-Septin-like GTPase superfamily. TrmE GTPase family. In terms of assembly, homodimer. Heterotetramer of two MnmE and two MnmG subunits. Requires K(+) as cofactor.

The protein resides in the cytoplasm. Its function is as follows. Exhibits a very high intrinsic GTPase hydrolysis rate. Involved in the addition of a carboxymethylaminomethyl (cmnm) group at the wobble position (U34) of certain tRNAs, forming tRNA-cmnm(5)s(2)U34. The chain is tRNA modification GTPase MnmE from Burkholderia orbicola (strain AU 1054).